The chain runs to 514 residues: Cobyric acid synthase (514 aa).

The 200-residue stretch at 249-448 folds into the GATase cobBQ-type domain; that stretch reads LIDIAVIKLP…VHGVFDNDEI (200 aa). The Nucleophile role is filled by cysteine 330. Residue histidine 440 is part of the active site.

Belongs to the CobB/CobQ family. CobQ subfamily.

It functions in the pathway cofactor biosynthesis; adenosylcobalamin biosynthesis. Catalyzes amidations at positions B, D, E, and G on adenosylcobyrinic A,C-diamide. NH(2) groups are provided by glutamine, and one molecule of ATP is hydrogenolyzed for each amidation. The sequence is that of Cobyric acid synthase from Ruminiclostridium cellulolyticum (strain ATCC 35319 / DSM 5812 / JCM 6584 / H10) (Clostridium cellulolyticum).